The following is a 343-amino-acid chain: NADH-cytochrome b5 reductase 2 (343 aa).

The chain crosses the membrane as a helical span at residues 41-61 (ILLGAAAVGLAGAGAYFFSGA). Positions 92–197 (QGWLSLKLEE…KGPLPKYPWE (106 aa)) constitute an FAD-binding FR-type domain. Residue 200-235 (KHKHIALVAGGTGITPMYQLIRAIFNNPDDKTKVTL) participates in FAD binding.

The protein belongs to the flavoprotein pyridine nucleotide cytochrome reductase family. FAD is required as a cofactor.

The protein resides in the mitochondrion outer membrane. It carries out the reaction 2 Fe(III)-[cytochrome b5] + NADH = 2 Fe(II)-[cytochrome b5] + NAD(+) + H(+). May mediate the reduction of outer membrane cytochrome b5. The polypeptide is NADH-cytochrome b5 reductase 2 (mcr-1) (Neurospora crassa (strain ATCC 24698 / 74-OR23-1A / CBS 708.71 / DSM 1257 / FGSC 987)).